Consider the following 483-residue polypeptide: ATP synthase subunit beta (483 aa).

169–176 (GGAGVGKT) lines the ATP pocket.

This sequence belongs to the ATPase alpha/beta chains family. As to quaternary structure, F-type ATPases have 2 components, CF(1) - the catalytic core - and CF(0) - the membrane proton channel. CF(1) has five subunits: alpha(3), beta(3), gamma(1), delta(1), epsilon(1). CF(0) has three main subunits: a(1), b(2) and c(9-12). The alpha and beta chains form an alternating ring which encloses part of the gamma chain. CF(1) is attached to CF(0) by a central stalk formed by the gamma and epsilon chains, while a peripheral stalk is formed by the delta and b chains.

It localises to the cell membrane. The enzyme catalyses ATP + H2O + 4 H(+)(in) = ADP + phosphate + 5 H(+)(out). In terms of biological role, produces ATP from ADP in the presence of a proton gradient across the membrane. The catalytic sites are hosted primarily by the beta subunits. The polypeptide is ATP synthase subunit beta (Corynebacterium glutamicum (strain R)).